The primary structure comprises 46 residues: Protein PsbN (46 aa).

The helical transmembrane segment at 10–30 threads the bilayer; sequence VAIAVLAALLGLTGFGVYTAF.

This sequence belongs to the PsbN family.

Its subcellular location is the cellular thylakoid membrane. Functionally, may play a role in photosystem I and II biogenesis. This Synechococcus sp. (strain CC9311) protein is Protein PsbN.